The sequence spans 357 residues: UDP-N-acetylglucosamine--N-acetylmuramyl-(pentapeptide) pyrophosphoryl-undecaprenol N-acetylglucosamine transferase (357 aa).

Residues 7 to 9 (TGG), asparagine 119, arginine 159, serine 187, isoleucine 241, and glutamine 286 contribute to the UDP-N-acetyl-alpha-D-glucosamine site.

This sequence belongs to the glycosyltransferase 28 family. MurG subfamily.

It localises to the cell inner membrane. The catalysed reaction is di-trans,octa-cis-undecaprenyl diphospho-N-acetyl-alpha-D-muramoyl-L-alanyl-D-glutamyl-meso-2,6-diaminopimeloyl-D-alanyl-D-alanine + UDP-N-acetyl-alpha-D-glucosamine = di-trans,octa-cis-undecaprenyl diphospho-[N-acetyl-alpha-D-glucosaminyl-(1-&gt;4)]-N-acetyl-alpha-D-muramoyl-L-alanyl-D-glutamyl-meso-2,6-diaminopimeloyl-D-alanyl-D-alanine + UDP + H(+). The protein operates within cell wall biogenesis; peptidoglycan biosynthesis. In terms of biological role, cell wall formation. Catalyzes the transfer of a GlcNAc subunit on undecaprenyl-pyrophosphoryl-MurNAc-pentapeptide (lipid intermediate I) to form undecaprenyl-pyrophosphoryl-MurNAc-(pentapeptide)GlcNAc (lipid intermediate II). In Nitrosomonas europaea (strain ATCC 19718 / CIP 103999 / KCTC 2705 / NBRC 14298), this protein is UDP-N-acetylglucosamine--N-acetylmuramyl-(pentapeptide) pyrophosphoryl-undecaprenol N-acetylglucosamine transferase.